The sequence spans 423 residues: Levansucrase (423 aa).

Sucrose contacts are provided by tryptophan 47, aspartate 48, serine 119, arginine 193, and aspartate 194. Aspartate 48 acts as the Nucleophile in catalysis. The active-site Proton donor/acceptor is the glutamate 278.

Belongs to the glycosyl hydrolase 68 family.

It is found in the secreted. The catalysed reaction is [6)-beta-D-fructofuranosyl-(2-&gt;](n) alpha-D-glucopyranoside + sucrose = [6)-beta-D-fructofuranosyl-(2-&gt;](n+1) alpha-D-glucopyranoside + D-glucose. Catalyzes the synthesis of levan, a fructose polymer, by transferring the fructosyl moiety from sucrose to a growing acceptor molecule. This Zymomonas mobilis subsp. mobilis (strain ATCC 10988 / DSM 424 / LMG 404 / NCIMB 8938 / NRRL B-806 / ZM1) protein is Levansucrase.